Consider the following 591-residue polypeptide: Acetyltransferase spyB (591 aa).

The N-linked (GlcNAc...) asparagine glycan is linked to asparagine 114. Transmembrane regions (helical) follow at residues 123–143 (GTIIWTLKYVPLAASRCLIFL), 168–188 (TLLYALPFLLAQNLVPAILIL), 199–219 (LWIFWSVFVFYQWLQIPISHG), 228–248 (VGVQLFIVILQGFNLVLINPL), 309–329 (SAFLVRQAAIVAWLYLYLNCA), 383–403 (ASILSVGVGLDAPEDWPPLFG), 453–473 (IFFVFLVSGVMHVMSDLLMGI), 481–501 (ILFFCSMAVGVMIEDAVQAAW), and 529–549 (LVGFIWVCVWLSLTTPAWLCP).

It belongs to the wax synthase family.

It localises to the membrane. The catalysed reaction is sartorypyrone F + acetyl-CoA = sartorypyrone G + CoA. It carries out the reaction sartorypyrone D + acetyl-CoA = sartorypyrone A + CoA. Its pathway is secondary metabolite biosynthesis; terpenoid biosynthesis. Its function is as follows. Acetyltransferase; part of the gene cluster that mediates the biosynthesis of meroterpenoids called sartorypyrones. SpyB catalyzes the last step of the pathway and is responsible for the acetylation of sartorypyrones D and F to produce sartorypyrones A and G, respectively. The biosynthesis of sartorypyrones begins with the production of triacetic acid lactone (TAL) by the NR-PKS spyA using one molecule of acetyl-CoA and two molecules of malonyl-CoA. The prenyltransferase spyF then conjugates geranylgeranyl pyrophosphate (GGPP) to TAL to form geranylgeranyl-triacetate lactone, for which the pathway-specific geranylgeranyl pyrophosphate synthase (GGPS) spyE is required to provide GGPP. Subsequently, geranylgeranyl-triacetate lactone is epoxidized at the terminal olein by the FAD-dependent monooxygenase spyC, followed by cyclization of the terpenoid component catalyzed by the terpene cyclase spyD to produce both the bicyclic sartorypyrone F and the monocyclic sartorypyrone D. Finally, the last step of the biosynthesis involves the acetylation of the meroterpenoids sartorypyrones D and F by the acetyltransferase SpyB to produce sartorypyrones A and G, respectively. The protein is Acetyltransferase spyB of Aspergillus fumigatus (strain ATCC MYA-4609 / CBS 101355 / FGSC A1100 / Af293) (Neosartorya fumigata).